We begin with the raw amino-acid sequence, 394 residues long: Elongation factor Tu (394 aa).

The 195-residue stretch at lysine 10–isoleucine 204 folds into the tr-type G domain. The G1 stretch occupies residues glycine 19 to threonine 26. Position 19–26 (glycine 19–threonine 26) interacts with GTP. Threonine 26 is a Mg(2+) binding site. A G2 region spans residues glycine 60 to serine 64. A G3 region spans residues aspartate 81–glycine 84. GTP-binding positions include aspartate 81 to histidine 85 and asparagine 136 to aspartate 139. The G4 stretch occupies residues asparagine 136 to aspartate 139. A G5 region spans residues serine 174–leucine 176.

It belongs to the TRAFAC class translation factor GTPase superfamily. Classic translation factor GTPase family. EF-Tu/EF-1A subfamily. Monomer.

Its subcellular location is the cytoplasm. It catalyses the reaction GTP + H2O = GDP + phosphate + H(+). Its function is as follows. GTP hydrolase that promotes the GTP-dependent binding of aminoacyl-tRNA to the A-site of ribosomes during protein biosynthesis. This chain is Elongation factor Tu, found in Rickettsia prowazekii (strain Madrid E).